Reading from the N-terminus, the 131-residue chain is Ribosome-binding factor A (131 aa).

The protein belongs to the RbfA family. Monomer. Binds 30S ribosomal subunits, but not 50S ribosomal subunits or 70S ribosomes.

It is found in the cytoplasm. In terms of biological role, one of several proteins that assist in the late maturation steps of the functional core of the 30S ribosomal subunit. Associates with free 30S ribosomal subunits (but not with 30S subunits that are part of 70S ribosomes or polysomes). Required for efficient processing of 16S rRNA. May interact with the 5'-terminal helix region of 16S rRNA. The protein is Ribosome-binding factor A of Ruegeria sp. (strain TM1040) (Silicibacter sp.).